The following is a 66-amino-acid chain: Muscarinic toxin alpha (66 aa).

Disulfide bonds link cysteine 3/cysteine 24, cysteine 17/cysteine 42, cysteine 46/cysteine 58, and cysteine 59/cysteine 64.

It belongs to the three-finger toxin family. Short-chain subfamily. Aminergic toxin sub-subfamily. In terms of tissue distribution, expressed by the venom gland.

It localises to the secreted. In terms of biological role, selectively binds with high-affinity to the a2B-adrenoceptor subtype (ADRA2B). The toxin reversibly binds to ADRA2B, and its mode of inhibition is non-competitive. The toxin has also been described to bind with high affinity to all muscarinic receptor subtypes (Ki=23 nM (on CHRM1), Ki=44 nM (on CHRM2), Ki=3 nM (on CHRM3), Ki=5 nM (on CHRM4), and Ki=8 nM (on CHRM5)) but no other data support these affinity values. The chain is Muscarinic toxin alpha from Dendroaspis polylepis polylepis (Black mamba).